The chain runs to 570 residues: Glycine--tRNA ligase (570 aa).

Arg-99 and Glu-165 together coordinate substrate. ATP-binding positions include 197 to 199 (RNE), 207 to 212 (IRLREF), 324 to 325 (EC), and 443 to 446 (GIDR). 212–216 (FTQAE) provides a ligand contact to substrate. 439–443 (EPSFG) contributes to the substrate binding site.

The protein belongs to the class-II aminoacyl-tRNA synthetase family.

It localises to the cytoplasm. It carries out the reaction tRNA(Gly) + glycine + ATP = glycyl-tRNA(Gly) + AMP + diphosphate. Its function is as follows. Catalyzes the attachment of glycine to tRNA(Gly). This chain is Glycine--tRNA ligase, found in Pyrococcus horikoshii (strain ATCC 700860 / DSM 12428 / JCM 9974 / NBRC 100139 / OT-3).